Here is an 804-residue protein sequence, read N- to C-terminus: Ribonucleoside-diphosphate reductase large subunit (804 aa).

One can recognise an ATP-cone domain in the interval 1-92 (MYVLNRKGEE…TDNLHKNTSD (92 aa)). ATP-binding positions include 5–6 (NR), 11–17 (EDISFDQ), threonine 53, and aspartate 57. Serine 216 serves as a coordination point for GDP. Residues cysteine 217 and cysteine 442 are joined by a disulfide bond. DTTP-binding positions include 225-227 (DSI), lysine 242, arginine 255, and 262-263 (RG). Asparagine 425 contacts GDP. The active-site Proton acceptor is asparagine 425. Cysteine 427 (cysteine radical intermediate) is an active-site residue. GDP contacts are provided by residues glutamate 429 and 603–606 (TAST). The active-site Proton acceptor is the glutamate 429.

The protein belongs to the ribonucleoside diphosphate reductase large chain family. Heterodimer of a large and a small subunit.

The catalysed reaction is a 2'-deoxyribonucleoside 5'-diphosphate + [thioredoxin]-disulfide + H2O = a ribonucleoside 5'-diphosphate + [thioredoxin]-dithiol. With respect to regulation, under complex allosteric control mediated by deoxynucleoside triphosphates and ATP binding to separate specificity and activation sites on the large subunit. The type of nucleotide bound at the specificity site determines substrate preference. It seems probable that ATP makes the enzyme reduce CDP and UDP, dGTP favors ADP reduction and dTTP favors GDP reduction. Stimulated by ATP and inhibited by dATP binding to the activity site. In terms of biological role, provides the precursors necessary for DNA synthesis. Catalyzes the biosynthesis of deoxyribonucleotides from the corresponding ribonucleotides. The chain is Ribonucleoside-diphosphate reductase large subunit (RNR1) from Plasmodium falciparum (isolate FCR-3 / Gambia).